The chain runs to 965 residues: Probable serine/threonine-protein kinase DDB_G0291516 (965 aa).

The segment at 114-170 is disordered; the sequence is KDSQKELLPSPQQLTPPTSLPSLPLLPLPQAPEQNEEQQLTQPPSPPSIPPPPPQKK. 2 stretches are compositionally biased toward low complexity: residues 119 to 136 and 144 to 155; these read ELLP…LPSL and APEQNEEQQLTQ. The segment covering 156 to 168 has biased composition (pro residues); the sequence is PPSPPSIPPPPPQ. 2 ANK repeats span residues 271 to 301 and 310 to 339; these read KGET…HMGI and LNKN…PLKM. In terms of domain architecture, Protein kinase spans 459–739; sequence IDFHTQIGSA…NVKAIKKEFL (281 aa). Residues 465 to 473 and K486 each bind ATP; that span reads IGSAGNASV. D587 serves as the catalytic Proton acceptor. The helical transmembrane segment at 653–673 threads the bilayer; sequence IYSLGIILWELVCVAMTGTYI. 8 N-linked (GlcNAc...) asparagine glycosylation sites follow: N760, N765, N905, N909, N910, N914, N934, and N938. Low complexity predominate over residues 881–940; it reads NINKNKNNNNNNNNNNNNNNNINNNNTFNNSTNNNSNDNINIPYDFNNNNNNNNNSCNNS. Residues 881-942 are disordered; it reads NINKNKNNNN…NNNSCNNSKK (62 aa).

Belongs to the protein kinase superfamily. Ser/Thr protein kinase family.

It localises to the membrane. The catalysed reaction is L-seryl-[protein] + ATP = O-phospho-L-seryl-[protein] + ADP + H(+). The enzyme catalyses L-threonyl-[protein] + ATP = O-phospho-L-threonyl-[protein] + ADP + H(+). This is Probable serine/threonine-protein kinase DDB_G0291516 from Dictyostelium discoideum (Social amoeba).